We begin with the raw amino-acid sequence, 369 residues long: 4-hydroxy-3-methylbut-2-en-1-yl diphosphate synthase (flavodoxin) (369 aa).

Residues Cys270, Cys273, Cys305, and Glu312 each coordinate [4Fe-4S] cluster.

Belongs to the IspG family. The cofactor is [4Fe-4S] cluster.

It carries out the reaction (2E)-4-hydroxy-3-methylbut-2-enyl diphosphate + oxidized [flavodoxin] + H2O + 2 H(+) = 2-C-methyl-D-erythritol 2,4-cyclic diphosphate + reduced [flavodoxin]. It functions in the pathway isoprenoid biosynthesis; isopentenyl diphosphate biosynthesis via DXP pathway; isopentenyl diphosphate from 1-deoxy-D-xylulose 5-phosphate: step 5/6. Functionally, converts 2C-methyl-D-erythritol 2,4-cyclodiphosphate (ME-2,4cPP) into 1-hydroxy-2-methyl-2-(E)-butenyl 4-diphosphate. This Pseudomonas syringae pv. syringae (strain B728a) protein is 4-hydroxy-3-methylbut-2-en-1-yl diphosphate synthase (flavodoxin).